The sequence spans 198 residues: Small ribosomal subunit protein uS4 (198 aa).

An S4 RNA-binding domain is found at 91 to 154 (SRLDNVVYRL…KNLNIVQEAV (64 aa)).

The protein belongs to the universal ribosomal protein uS4 family. Part of the 30S ribosomal subunit. Contacts protein S5. The interaction surface between S4 and S5 is involved in control of translational fidelity.

One of the primary rRNA binding proteins, it binds directly to 16S rRNA where it nucleates assembly of the body of the 30S subunit. Functionally, with S5 and S12 plays an important role in translational accuracy. The polypeptide is Small ribosomal subunit protein uS4 (Onion yellows phytoplasma (strain OY-M)).